The chain runs to 122 residues: MARIAGVDLPKNKRMEIALTYIYGIGRTKAKEILEKAEISFDTKTDELADSEINAIRTIIDRDHKVEGDLRRDISMSIKRLMDVGAYRGLRHRKGLPVRGQRTHTNARTRKGPRRAIAGKKK.

The disordered stretch occupies residues 94–122 (KGLPVRGQRTHTNARTRKGPRRAIAGKKK).

The protein belongs to the universal ribosomal protein uS13 family. As to quaternary structure, part of the 30S ribosomal subunit. Forms a loose heterodimer with protein S19. Forms two bridges to the 50S subunit in the 70S ribosome.

In terms of biological role, located at the top of the head of the 30S subunit, it contacts several helices of the 16S rRNA. In the 70S ribosome it contacts the 23S rRNA (bridge B1a) and protein L5 of the 50S subunit (bridge B1b), connecting the 2 subunits; these bridges are implicated in subunit movement. Contacts the tRNAs in the A and P-sites. This is Small ribosomal subunit protein uS13 from Syntrophus aciditrophicus (strain SB).